The primary structure comprises 20 residues: Cytolysin tenebrosin-A (20 aa).

The interval 3 to 12 is plays an important role in the hemolytic activity; that stretch reads AVAGAVIEGA. Residues 11 to 20 form an N-terminal region region; the sequence is GATLTFEVLQ.

This sequence belongs to the actinoporin family. Sea anemone subfamily. Octamer or nonamer in membranes. Monomer in the soluble state.

The protein resides in the secreted. It is found in the nematocyst. The protein localises to the target cell membrane. In terms of biological role, pore-forming protein that forms cations-selective hydrophilic pores of around 1 nm and causes cardiac stimulation and cytolysis. Pore formation is a multi-step process that involves specific recognition of membrane sphingomyelin (but neither cholesterol nor phosphatidylcholine) using aromatic rich region and adjacent phosphocholine (POC) binding site, firm binding to the membrane (mainly driven by hydrophobic interactions) accompanied by the transfer of the N-terminal region to the lipid-water interface and finally pore formation after oligomerization of monomers. This chain is Cytolysin tenebrosin-A, found in Actinia tenebrosa (Australian red waratah sea anemone).